A 388-amino-acid polypeptide reads, in one-letter code: Succinate--CoA ligase [ADP-forming] subunit beta (388 aa).

Residues 9 to 244 (KGVLSSFGVT…PDEYAAEELE (236 aa)) enclose the ATP-grasp domain. Residues Lys-46, 53–55 (GRG), Glu-99, Val-102, and Glu-107 contribute to the ATP site. Mg(2+) is bound by residues Asn-199 and Asp-213. Substrate-binding positions include Asn-264 and 320–322 (GIM).

This sequence belongs to the succinate/malate CoA ligase beta subunit family. As to quaternary structure, heterotetramer of two alpha and two beta subunits. Requires Mg(2+) as cofactor.

The enzyme catalyses succinate + ATP + CoA = succinyl-CoA + ADP + phosphate. The catalysed reaction is GTP + succinate + CoA = succinyl-CoA + GDP + phosphate. Its pathway is carbohydrate metabolism; tricarboxylic acid cycle; succinate from succinyl-CoA (ligase route): step 1/1. In terms of biological role, succinyl-CoA synthetase functions in the citric acid cycle (TCA), coupling the hydrolysis of succinyl-CoA to the synthesis of either ATP or GTP and thus represents the only step of substrate-level phosphorylation in the TCA. The beta subunit provides nucleotide specificity of the enzyme and binds the substrate succinate, while the binding sites for coenzyme A and phosphate are found in the alpha subunit. The sequence is that of Succinate--CoA ligase [ADP-forming] subunit beta from Anaplasma marginale (strain St. Maries).